We begin with the raw amino-acid sequence, 379 residues long: Chaperone protein DnaJ (379 aa).

The J domain maps to 7 to 72 (CYYETLEVDR…DKRAAYDRYG (66 aa)). Residues 135-213 (GKTAQIEIPV…CSGAGRIERE (79 aa)) form a CR-type zinc finger. Zn(2+) contacts are provided by Cys-148, Cys-151, Cys-165, Cys-168, Cys-187, Cys-190, Cys-201, and Cys-204. 4 CXXCXGXG motif repeats span residues 148–155 (CESCSGTG), 165–172 (CSMCGGAG), 187–194 (CPGCQGRG), and 201–208 (CPACSGAG).

It belongs to the DnaJ family. Homodimer. It depends on Zn(2+) as a cofactor.

The protein localises to the cytoplasm. Its function is as follows. Participates actively in the response to hyperosmotic and heat shock by preventing the aggregation of stress-denatured proteins and by disaggregating proteins, also in an autonomous, DnaK-independent fashion. Unfolded proteins bind initially to DnaJ; upon interaction with the DnaJ-bound protein, DnaK hydrolyzes its bound ATP, resulting in the formation of a stable complex. GrpE releases ADP from DnaK; ATP binding to DnaK triggers the release of the substrate protein, thus completing the reaction cycle. Several rounds of ATP-dependent interactions between DnaJ, DnaK and GrpE are required for fully efficient folding. Also involved, together with DnaK and GrpE, in the DNA replication of plasmids through activation of initiation proteins. The polypeptide is Chaperone protein DnaJ (Rhodopseudomonas palustris (strain BisB18)).